A 1286-amino-acid polypeptide reads, in one-letter code: Galactose/N-acetyl-D-galactosamine lectin heavy subunit 2 (1286 aa).

Residues 1 to 15 (MKLLLLNILLLCCLA) form the signal peptide. Residues 16 to 1227 (DKLNEFSADI…NNVGAIAAAT (1212 aa)) lie on the Extracellular side of the membrane. N-linked (GlcNAc...) asparagine glycosylation is found at Asn-200, Asn-331, Asn-384, Asn-462, Asn-652, Asn-883, Asn-1197, and Asn-1207. A helical membrane pass occupies residues 1228-1248 (TVAVVVVAVVVALIVVSIGLF). Residues 1249–1286 (KTYQLVSSAMKNAITTTNENAEYVGADNEATNAATYNG) lie on the Cytoplasmic side of the membrane.

Heterodimer composed of a 170 kDa heavy subunit (hgl) and a 31/35 kDa light subunit (lgl); disulfide-linked. Post-translationally, N-glycosylated.

The protein resides in the cell membrane. Its function is as follows. Lectin which binds galactose and N-acetyl-D-galactosamine of host glycoproteins and thus mediates adhesion to host cells. Mediates adherence to host colonic mucins, an essential step for pathogenic tissue invasion. The polypeptide is Galactose/N-acetyl-D-galactosamine lectin heavy subunit 2 (Entamoeba histolytica (strain ATCC 30459 / HM-1:IMSS / ABRM)).